A 155-amino-acid polypeptide reads, in one-letter code: Small ribosomal subunit protein uS9 (155 aa).

The protein belongs to the universal ribosomal protein uS9 family.

In Rhizobium meliloti (strain 1021) (Ensifer meliloti), this protein is Small ribosomal subunit protein uS9.